Reading from the N-terminus, the 457-residue chain is tRNA modification GTPase MnmE (457 aa).

Residues R25, E87, and R126 each contribute to the (6S)-5-formyl-5,6,7,8-tetrahydrofolate site. One can recognise a TrmE-type G domain in the interval 223–377; sequence GISTAIIGRP…IEERINQLFF (155 aa). Position 233 (N233) interacts with K(+). Residues 233-238, 252-258, and 277-280 each bind GTP; these read NVGKSS, TDIEGTT, and DTAG. S237 provides a ligand contact to Mg(2+). The K(+) site is built by T252, I254, and T257. Position 258 (T258) interacts with Mg(2+). Residue K457 participates in (6S)-5-formyl-5,6,7,8-tetrahydrofolate binding.

Belongs to the TRAFAC class TrmE-Era-EngA-EngB-Septin-like GTPase superfamily. TrmE GTPase family. Homodimer. Heterotetramer of two MnmE and two MnmG subunits. K(+) is required as a cofactor.

It localises to the cytoplasm. Functionally, exhibits a very high intrinsic GTPase hydrolysis rate. Involved in the addition of a carboxymethylaminomethyl (cmnm) group at the wobble position (U34) of certain tRNAs, forming tRNA-cmnm(5)s(2)U34. This chain is tRNA modification GTPase MnmE, found in Streptococcus sanguinis (strain SK36).